The primary structure comprises 955 residues: B3 domain-containing protein Os07g0563300 (955 aa).

Composition is skewed to pro residues over residues 1-20 and 29-45; these read MSSP…PPPS and VQPP…PQQP. Disordered regions lie at residues 1–81 and 325–392; these read MSSP…QRPR and ARKG…SSSL. Low complexity predominate over residues 62–71; sequence QHQQQQQGPP. Polar residues predominate over residues 332-342; it reads DPCSSVSTTFK. The segment covering 343 to 355 has biased composition (basic and acidic residues); that stretch reads LDSHHPSILKDDP. Residues 382 to 392 show a composition bias toward low complexity; the sequence is QQQQQMASSSL. A DNA-binding region (TF-B3) is located at residues 453–554; it reads FEKMLSASDA…KLVMGFRKAT (102 aa). 2 stretches are compositionally biased toward polar residues: residues 556-565 and 598-608; these read LSAEQDQPTK and NTESKSSSPVE. A disordered region spans residues 556-642; that stretch reads LSAEQDQPTK…PLPVKRKATS (87 aa). A CW-type zinc finger spans residues 708–758; that stretch reads SGENHQWAQCEDCSKWRKLPVDALLPSKWTCSDNKWDSERSSCDSAQEINM. Positions 717, 720, 738, and 750 each coordinate Zn(2+). Positions 856 to 955 are disordered; the sequence is MMRREKRQQS…ATRLLRDNPT (100 aa). Residues 862–877 show a composition bias toward basic and acidic residues; the sequence is RQQSEKDSGVPRKREP. Composition is skewed to polar residues over residues 878–900 and 920–933; these read GQSS…SSPH and TSSP…LNSQ. Residues 939–955 are compositionally biased toward basic and acidic residues; that stretch reads EQSPKSDATRLLRDNPT.

Its subcellular location is the nucleus. This chain is B3 domain-containing protein Os07g0563300, found in Oryza sativa subsp. japonica (Rice).